Consider the following 345-residue polypeptide: S-adenosylmethionine:tRNA ribosyltransferase-isomerase (345 aa).

The protein belongs to the QueA family. Monomer.

It is found in the cytoplasm. The catalysed reaction is 7-aminomethyl-7-carbaguanosine(34) in tRNA + S-adenosyl-L-methionine = epoxyqueuosine(34) in tRNA + adenine + L-methionine + 2 H(+). The protein operates within tRNA modification; tRNA-queuosine biosynthesis. Functionally, transfers and isomerizes the ribose moiety from AdoMet to the 7-aminomethyl group of 7-deazaguanine (preQ1-tRNA) to give epoxyqueuosine (oQ-tRNA). This is S-adenosylmethionine:tRNA ribosyltransferase-isomerase from Shewanella pealeana (strain ATCC 700345 / ANG-SQ1).